The primary structure comprises 295 residues: Glycine N-acyltransferase-like protein Keg1 (295 aa).

The residue at position 41 (K41) is an N6-acetyllysine; alternate. At K41 the chain carries N6-succinyllysine; alternate. Position 43 is an N6-acetyllysine (K43). K48 is modified (N6-acetyllysine; alternate). N6-succinyllysine; alternate is present on K48. K80 and K83 each carry N6-acetyllysine. An N6-acetyllysine; alternate mark is found at K124, K128, and K140. K124, K128, and K140 each carry N6-succinyllysine; alternate. N6-acetyllysine is present on K150. K255 is modified (N6-acetyllysine; alternate). Position 255 is an N6-succinyllysine; alternate (K255).

This sequence belongs to the glycine N-acyltransferase family. In terms of assembly, binds to microtubules.

Its subcellular location is the cytoplasm. It localises to the cytoskeleton. The protein localises to the microtubule organizing center. It is found in the centrosome. It catalyses the reaction an acyl-CoA + glycine = an N-acylglycine + CoA + H(+). Its function is as follows. Acyltransferase which transfers the acyl group to the N-terminus of glycine. Can conjugate a multitude of substrates to form a variety of N-acylglycines. This Mus musculus (Mouse) protein is Glycine N-acyltransferase-like protein Keg1 (Keg1).